A 495-amino-acid polypeptide reads, in one-letter code: Leucine aminopeptidase 2 (495 aa).

The first 21 residues, 1 to 21 (MKTQLLSLGVALTAISQGVIA), serve as a signal peptide directing secretion. The PA domain occupies 124–218 (PPADKITAEL…ADGKNLASLV (95 aa)). Asn-142 and Asn-235 each carry an N-linked (GlcNAc...) asparagine glycan. Zn(2+) is bound by residues His-259 and Asp-271. N-linked (GlcNAc...) asparagine glycosylation is present at Asn-272. Glu-303 (proton acceptor) is an active-site residue. Residues Glu-304 and Asp-332 each coordinate Zn(2+). Residue Asn-352 is glycosylated (N-linked (GlcNAc...) asparagine). A Zn(2+)-binding site is contributed by His-430. The interval 464–495 (GFPTRPKTGKRDVSPRGQSMPGGGCGHHSVFM) is disordered.

The protein belongs to the peptidase M28 family. M28A subfamily. In terms of assembly, monomer. Zn(2+) is required as a cofactor.

The protein resides in the secreted. Extracellular aminopeptidase that releases a wide variety of amino acids from natural peptides and contributes to pathogenicity. The chain is Leucine aminopeptidase 2 (LAP2) from Arthroderma otae (strain ATCC MYA-4605 / CBS 113480) (Microsporum canis).